The sequence spans 64 residues: Large ribosomal subunit protein bL32 (64 aa).

The segment at 1 to 23 (MAVQKSRVTPSRRGQRRSHDALA) is disordered.

This sequence belongs to the bacterial ribosomal protein bL32 family.

In Xylella fastidiosa (strain M23), this protein is Large ribosomal subunit protein bL32.